The following is a 579-amino-acid chain: 2-isopropylmalate synthase (579 aa).

One can recognise a Pyruvate carboxyltransferase domain in the interval 40-314 (PRWCAVDLRD…DPMIDFSDID (275 aa)). The Mg(2+) site is built by Asp49, His253, His255, and Asn289. Residues 456–579 (SDEEQAQWGR…VNRAVRDAQA (124 aa)) are regulatory domain.

It belongs to the alpha-IPM synthase/homocitrate synthase family. LeuA type 2 subfamily. Homodimer. Mg(2+) is required as a cofactor.

It is found in the cytoplasm. It catalyses the reaction 3-methyl-2-oxobutanoate + acetyl-CoA + H2O = (2S)-2-isopropylmalate + CoA + H(+). It functions in the pathway amino-acid biosynthesis; L-leucine biosynthesis; L-leucine from 3-methyl-2-oxobutanoate: step 1/4. Its function is as follows. Catalyzes the condensation of the acetyl group of acetyl-CoA with 3-methyl-2-oxobutanoate (2-ketoisovalerate) to form 3-carboxy-3-hydroxy-4-methylpentanoate (2-isopropylmalate). This Paenarthrobacter aurescens (strain TC1) protein is 2-isopropylmalate synthase.